A 117-amino-acid polypeptide reads, in one-letter code: Flagellar transcriptional regulator FlhD (117 aa).

The protein belongs to the FlhD family. In terms of assembly, homodimer; disulfide-linked. Forms a heterohexamer composed of two FlhC and four FlhD subunits. Each FlhC binds a FlhD dimer, forming a heterotrimer, and a hexamer assembles by dimerization of two heterotrimers.

The protein localises to the cytoplasm. Functions in complex with FlhC as a master transcriptional regulator that regulates transcription of several flagellar and non-flagellar operons by binding to their promoter region. Activates expression of class 2 flagellar genes, including fliA, which is a flagellum-specific sigma factor that turns on the class 3 genes. Also regulates genes whose products function in a variety of physiological pathways. In Photorhabdus laumondii subsp. laumondii (strain DSM 15139 / CIP 105565 / TT01) (Photorhabdus luminescens subsp. laumondii), this protein is Flagellar transcriptional regulator FlhD.